The sequence spans 363 residues: D-alanine--D-alanine ligase (363 aa).

In terms of domain architecture, ATP-grasp spans 148 to 353 (KKLLAAEGLP…YGTLVSTLIE (206 aa)). Position 176-231 (176-231 (RERLGLPVFVKPARAGSSIGITKVDDWAALDTAIAAAREHDPKVIVEAGIVGREVE)) interacts with ATP. Mg(2+) contacts are provided by D308, E320, and N322.

It belongs to the D-alanine--D-alanine ligase family. It depends on Mg(2+) as a cofactor. Requires Mn(2+) as cofactor.

It is found in the cytoplasm. The enzyme catalyses 2 D-alanine + ATP = D-alanyl-D-alanine + ADP + phosphate + H(+). The protein operates within cell wall biogenesis; peptidoglycan biosynthesis. Functionally, cell wall formation. The chain is D-alanine--D-alanine ligase from Nocardia farcinica (strain IFM 10152).